Here is a 119-residue protein sequence, read N- to C-terminus: Large ribosomal subunit protein bL20 (119 aa).

The protein belongs to the bacterial ribosomal protein bL20 family.

Functionally, binds directly to 23S ribosomal RNA and is necessary for the in vitro assembly process of the 50S ribosomal subunit. It is not involved in the protein synthesizing functions of that subunit. In Acidovorax sp. (strain JS42), this protein is Large ribosomal subunit protein bL20.